The chain runs to 153 residues: SKP1-like protein 5 (153 aa).

The interval 90–153 (MMAANYLNIQ…IREENQWAFQ (64 aa)) is interaction with the F-box domain of F-box proteins.

It belongs to the SKP1 family. Part of a SCF (SKP1-cullin-F-box) protein ligase complex. Interacts with PP2A13. In terms of tissue distribution, restricted to inflorescences, especially in the inflorescence meristem (IM).

The protein localises to the nucleus. It functions in the pathway protein modification; protein ubiquitination. Functionally, involved in ubiquitination and subsequent proteasomal degradation of target proteins. Together with CUL1, RBX1 and a F-box protein, it forms a SCF E3 ubiquitin ligase complex. The functional specificity of this complex depends on the type of F-box protein. In the SCF complex, it serves as an adapter that links the F-box protein to CUL1. In Arabidopsis thaliana (Mouse-ear cress), this protein is SKP1-like protein 5 (ASK5).